The chain runs to 401 residues: Large ribosomal subunit protein uL3 (401 aa).

The segment at 1–22 (MSHRKFSAPRHGHMGFTPKKRS) is disordered.

The protein belongs to the universal ribosomal protein uL3 family.

Its subcellular location is the cytoplasm. Its function is as follows. The L3 protein is a component of the large subunit of cytoplasmic ribosomes. This is Large ribosomal subunit protein uL3 (rpl-3) from Caenorhabditis elegans.